Reading from the N-terminus, the 188-residue chain is Protein-arginine kinase activator protein (188 aa).

4 consecutive short sequence motifs (CXXC metal binding motif) follow at residues 3 to 6 (CENC), 29 to 32 (CQTC), 87 to 90 (CPSC), and 105 to 108 (CANC). One can recognise a UVR domain in the interval 145–180 (KRKIEEKNEYLKKLIEIQDFEEAAIVRDEIKALKAE).

In terms of assembly, interacts with McsB and CtsR; the CXXC motifs are needed for the binding.

Its function is as follows. Activates the phosphorylation activity of the protein-arginine kinase McsB. May function as an important molecule for oxidative tolerance in various types of stress including that of heavy metals. Binds to Cu(2+), Zn(2+), Co(2+) and Cd(2+) via its CXXC metal binding motifs. The protein is Protein-arginine kinase activator protein of Staphylococcus aureus (strain NCTC 8325 / PS 47).